The primary structure comprises 198 residues: tRNA (pseudouridine(54)-N(1))-methyltransferase (198 aa).

An S-adenosyl-L-methionine-binding site is contributed by leucine 128.

The protein belongs to the methyltransferase superfamily. TrmY family. As to quaternary structure, homodimer.

The protein resides in the cytoplasm. It catalyses the reaction pseudouridine(54) in tRNA + S-adenosyl-L-methionine = N(1)-methylpseudouridine(54) in tRNA + S-adenosyl-L-homocysteine + H(+). In terms of biological role, specifically catalyzes the N1-methylation of pseudouridine at position 54 (Psi54) in tRNAs. This Haloferax volcanii (strain ATCC 29605 / DSM 3757 / JCM 8879 / NBRC 14742 / NCIMB 2012 / VKM B-1768 / DS2) (Halobacterium volcanii) protein is tRNA (pseudouridine(54)-N(1))-methyltransferase.